The primary structure comprises 481 residues: Proline--tRNA ligase (481 aa).

The protein belongs to the class-II aminoacyl-tRNA synthetase family. ProS type 3 subfamily. In terms of assembly, homodimer.

The protein resides in the cytoplasm. The enzyme catalyses tRNA(Pro) + L-proline + ATP = L-prolyl-tRNA(Pro) + AMP + diphosphate. Functionally, catalyzes the attachment of proline to tRNA(Pro) in a two-step reaction: proline is first activated by ATP to form Pro-AMP and then transferred to the acceptor end of tRNA(Pro). The polypeptide is Proline--tRNA ligase (Chlorobium luteolum (strain DSM 273 / BCRC 81028 / 2530) (Pelodictyon luteolum)).